The primary structure comprises 1624 residues: Latent-transforming growth factor beta-binding protein 4 (1624 aa).

The N-terminal stretch at 1 to 27 (MPRPGTSGRRPLLLVLLLPLFAAATSA) is a signal peptide. A disordered region spans residues 125–146 (RRPRGPGGRGLLRRRPPQRAPA). One can recognise an EGF-like 1 domain in the interval 149–181 (APVLCPLICHNGGVCVKPDRCLCPPDFAGKFCQ). 6 cysteine pairs are disulfide-bonded: Cys153/Cys163, Cys157/Cys169, Cys171/Cys180, Cys289/Cys311, Cys298/Cys324, and Cys312/Cys327. The region spanning 287 to 339 (GYCFRELRGGECASPLPGLRTQEVCCRGAGLAWGVHDCQLCSERLGNSERVSA) is the TB 1 domain. A glycan (N-linked (GlcNAc...) asparagine) is linked at Asn352. Residues 357 to 397 (DVDECATGGRCQHGECANTRGGYTCVCPDGFLLDSSRSSCI) form the EGF-like 2; calcium-binding domain. 7 disulfides stabilise this stretch: Cys361/Cys372, Cys367/Cys381, Cys383/Cys396, Cys409/Cys431, Cys418/Cys444, Cys432/Cys447, and Cys433/Cys459. Residues 407–459 (GPCFRVLRDGGCSLPILRNITKQICCCSRVGKAWGRGCQLCPPFGSEGFREIC) form the TB 2 domain. N-linked (GlcNAc...) asparagine glycosylation is present at Asn425. A disordered region spans residues 474 to 546 (YNTRPLGQEP…PEIPESGPSS (73 aa)). Positions 487–500 (SLSQPRTLPATSRP) are enriched in polar residues. A compositionally biased stretch (basic and acidic residues) spans 508 to 522 (HRLEPRPEPRPDPRP). Residues 545–586 (SSGMCQRNPQVCGPGRCISRPSGYTCACDSGFRLSPQGTRCI) enclose the EGF-like 3 domain. Cystine bridges form between Cys549/Cys561, Cys556/Cys570, Cys572/Cys585, Cys591/Cys603, Cys598/Cys612, Cys614/Cys627, Cys633/Cys645, Cys640/Cys654, Cys656/Cys669, Cys675/Cys687, Cys682/Cys696, Cys698/Cys707, Cys714/Cys726, Cys721/Cys735, Cys737/Cys750, Cys756/Cys768, Cys763/Cys777, Cys779/Cys792, Cys838/Cys851, Cys845/Cys860, Cys862/Cys876, Cys882/Cys894, Cys888/Cys903, Cys905/Cys918, Cys924/Cys935, Cys930/Cys944, Cys946/Cys959, Cys1053/Cys1065, Cys1059/Cys1074, and Cys1076/Cys1089. The region spanning 587–628 (DVDECRRVPPPCAPGRCENSPGSFRCVCGPGFRAGPRAAECL) is the EGF-like 4; calcium-binding domain. The region spanning 629 to 670 (DVDECHRVPPPCDLGRCENTPGSFLCVCPAGYQAAPHGASCQ) is the EGF-like 5; calcium-binding domain. The 38-residue stretch at 671–708 (DVDECTQSPGLCGRGACKNLPGSFRCVCPAGFRGSACE) folds into the EGF-like 6; calcium-binding domain. An EGF-like 7; calcium-binding domain is found at 710-751 (DVDECAQEPPPCGPGRCDNTAGSFHCACPAGFRSRGPGAPCQ). In terms of domain architecture, EGF-like 8; calcium-binding spans 752-793 (DVDECARSPPPCTYGRCENTEGSFQCVCPMGFQPNTAGSECE). Positions 834–877 (DVDECSSGAPPCGPHGHCTNTEGSFRCSCAPGYRAPSGRPGPCA) constitute an EGF-like 9; calcium-binding domain. The region spanning 878–919 (DVNECLEGDFCFPHGECLNTDGSFACTCAPGYRPGPRGASCL) is the EGF-like 10; calcium-binding domain. An EGF-like 11; calcium-binding domain is found at 920–960 (DVDECSEEDLCQSGICTNTDGSFECICPPGHRAGPDLASCL). An EGF-like 12; calcium-binding domain is found at 1049 to 1090 (DVDECRNRSFCGAHAVCQNLPGSFQCLCDQGYEGARDGRHCV). An N-linked (GlcNAc...) asparagine glycan is attached at Asn1055. The segment at 1130–1179 (GRCVPPRTSAGTFPGSQPQAPASPVLPARPPPPPLPRRPSTPRQGPVGSG) is disordered. Polar residues predominate over residues 1138–1149 (SAGTFPGSQPQA). The span at 1156–1168 (PARPPPPPLPRRP) shows a compositional bias: pro residues. The TB 3 domain maps to 1181-1235 (RECYFDTAAPDACDNILARNVTWQECCCTVGEGWGSGCRIQQCPGTETAEYQSLC). Disulfide bonds link Cys1183–Cys1206, Cys1193–Cys1218, Cys1207–Cys1223, Cys1208–Cys1235, Cys1257–Cys1270, Cys1265–Cys1279, Cys1281–Cys1294, Cys1300–Cys1312, Cys1307–Cys1321, and Cys1323–Cys1336. An N-linked (GlcNAc...) asparagine glycan is attached at Asn1200. An EGF-like 13; calcium-binding domain is found at 1253-1295 (DVDECQLFRDQVCKSGVCVNTAPGYSCYCSNGYYYHTQRLECI). The region spanning 1296–1337 (DNDECADEEPACEGGRCVNTVGSYHCTCEPPLVLDGSQRRCV) is the EGF-like 14; calcium-binding domain. Asn1339 carries an N-linked (GlcNAc...) asparagine glycan. A TB 4 domain is found at 1349–1402 (GVCWQEVGADLVCSHPRLDRQATYTECCCLYGEAWGMDCALCPAQDSDDFEALC). Cystine bridges form between Cys1351/Cys1375, Cys1361/Cys1387, Cys1376/Cys1390, and Cys1377/Cys1402. Residues 1446–1458 (ALPYDPYPPPPGP) show a composition bias toward pro residues. Positions 1446–1524 (ALPYDPYPPP…PPEGGSYAGS (79 aa)) are disordered. Basic and acidic residues predominate over residues 1501–1510 (RSRDTRRSFP). EGF-like domains lie at 1533–1573 (EAEE…MACV) and 1574–1618 (DINE…HHCA). Cystine bridges form between Cys1537–Cys1548, Cys1543–Cys1557, Cys1559–Cys1572, Cys1578–Cys1593, Cys1588–Cys1602, and Cys1604–Cys1617.

It belongs to the LTBP family. As to quaternary structure, forms part of the large latent transforming growth factor beta precursor complex; removal is essential for activation of complex. Interacts with LTBP1 and TGFB1. Interacts with EFEMP2; this interaction promotes fibrillar deposition of EFEMP2. Post-translationally, contains hydroxylated asparagine residues. Highly expressed in heart, skeletal muscle, pancreas, uterus, and small intestine. Weakly expressed in placenta and lung.

The protein localises to the secreted. The protein resides in the extracellular space. It localises to the extracellular matrix. Key regulator of transforming growth factor beta (TGFB1, TGFB2 and TGFB3) that controls TGF-beta activation by maintaining it in a latent state during storage in extracellular space. Associates specifically via disulfide bonds with the Latency-associated peptide (LAP), which is the regulatory chain of TGF-beta, and regulates integrin-dependent activation of TGF-beta. The chain is Latent-transforming growth factor beta-binding protein 4 (LTBP4) from Homo sapiens (Human).